The primary structure comprises 342 residues: S-adenosylmethionine:tRNA ribosyltransferase-isomerase (342 aa).

This sequence belongs to the QueA family. Monomer.

The protein localises to the cytoplasm. It catalyses the reaction 7-aminomethyl-7-carbaguanosine(34) in tRNA + S-adenosyl-L-methionine = epoxyqueuosine(34) in tRNA + adenine + L-methionine + 2 H(+). The protein operates within tRNA modification; tRNA-queuosine biosynthesis. In terms of biological role, transfers and isomerizes the ribose moiety from AdoMet to the 7-aminomethyl group of 7-deazaguanine (preQ1-tRNA) to give epoxyqueuosine (oQ-tRNA). The protein is S-adenosylmethionine:tRNA ribosyltransferase-isomerase of Streptococcus pneumoniae serotype 4 (strain ATCC BAA-334 / TIGR4).